Reading from the N-terminus, the 164-residue chain is Transcriptional repressor NrdR (164 aa).

Residues 3 to 34 (CPKCNYHKSSVVDSRQAEDGNTIRRRRECEQC) fold into a zinc finger. One can recognise an ATP-cone domain in the interval 49–139 (LLVIKKDGTR…VYKSFKDVDE (91 aa)).

This sequence belongs to the NrdR family. Zn(2+) serves as cofactor.

Its function is as follows. Negatively regulates transcription of bacterial ribonucleotide reductase nrd genes and operons by binding to NrdR-boxes. The protein is Transcriptional repressor NrdR of Streptococcus pyogenes serotype M5 (strain Manfredo).